The primary structure comprises 295 residues: 3-methyl-2-oxobutanoate hydroxymethyltransferase (295 aa).

Residues Asp53 and Asp92 each contribute to the Mg(2+) site. 3-methyl-2-oxobutanoate is bound by residues 53–54 (DS), Asp92, and Lys122. Glu124 serves as a coordination point for Mg(2+). Residue Glu191 is the Proton acceptor of the active site.

The protein belongs to the PanB family. As to quaternary structure, homodecamer; pentamer of dimers. Mg(2+) serves as cofactor.

The protein resides in the cytoplasm. The catalysed reaction is 3-methyl-2-oxobutanoate + (6R)-5,10-methylene-5,6,7,8-tetrahydrofolate + H2O = 2-dehydropantoate + (6S)-5,6,7,8-tetrahydrofolate. It functions in the pathway cofactor biosynthesis; (R)-pantothenate biosynthesis; (R)-pantoate from 3-methyl-2-oxobutanoate: step 1/2. Functionally, catalyzes the reversible reaction in which hydroxymethyl group from 5,10-methylenetetrahydrofolate is transferred onto alpha-ketoisovalerate to form ketopantoate. In Koribacter versatilis (strain Ellin345), this protein is 3-methyl-2-oxobutanoate hydroxymethyltransferase.